Reading from the N-terminus, the 437-residue chain is 2-methylisoborneol synthase (437 aa).

The disordered stretch occupies residues 32-125 (AHDSEATVGG…IPGLYHHPVP (94 aa)). The segment covering 59–73 (PPSPAAPPTDVPAPE) has biased composition (pro residues). Mg(2+) is bound by residues aspartate 194, aspartate 195, glutamate 199, asparagine 342, serine 346, and glutamate 350.

The protein belongs to the terpene synthase family. 2-methylisoborneol synthase subfamily. It depends on Mg(2+) as a cofactor.

It carries out the reaction (E)-2-methylgeranyl diphosphate + H2O = 2-methylisoborneol + diphosphate. Catalyzes the cyclization of 2-methylgeranyl diphosphate (2-MeGPP) to 2-methylisoborneol (2-MIB), which likely involves the intermediacy of 2-methyllinalyl diphosphate. In Streptomyces griseus, this protein is 2-methylisoborneol synthase.